The chain runs to 343 residues: Dihydroorotase (343 aa).

2 residues coordinate Zn(2+): histidine 13 and histidine 15. Substrate contacts are provided by residues 15–17 and asparagine 41; that span reads HLR. The Zn(2+) site is built by lysine 99, histidine 136, and histidine 174. An N6-carboxylysine modification is found at lysine 99. Substrate is bound at residue histidine 136. Leucine 219 is a substrate binding site. Aspartate 247 contributes to the Zn(2+) binding site. Aspartate 247 is an active-site residue. Substrate contacts are provided by histidine 251 and alanine 263.

It belongs to the metallo-dependent hydrolases superfamily. DHOase family. Class II DHOase subfamily. Homodimer. It depends on Zn(2+) as a cofactor.

It carries out the reaction (S)-dihydroorotate + H2O = N-carbamoyl-L-aspartate + H(+). It functions in the pathway pyrimidine metabolism; UMP biosynthesis via de novo pathway; (S)-dihydroorotate from bicarbonate: step 3/3. Functionally, catalyzes the reversible cyclization of carbamoyl aspartate to dihydroorotate. The sequence is that of Dihydroorotase from Shewanella baltica (strain OS195).